Reading from the N-terminus, the 168-residue chain is Transcription elongation factor GreB (168 aa).

Positions 61–84 form a coiled coil; that stretch reads KKMLREIDSRVRFLRKRLENLKVV.

Belongs to the GreA/GreB family. GreB subfamily.

Its function is as follows. Necessary for efficient RNA polymerase transcription elongation past template-encoded arresting sites. The arresting sites in DNA have the property of trapping a certain fraction of elongating RNA polymerases that pass through, resulting in locked ternary complexes. Cleavage of the nascent transcript by cleavage factors such as GreA or GreB allows the resumption of elongation from the new 3'terminus. GreB releases sequences of up to 9 nucleotides in length. In Pseudomonas aeruginosa (strain ATCC 15692 / DSM 22644 / CIP 104116 / JCM 14847 / LMG 12228 / 1C / PRS 101 / PAO1), this protein is Transcription elongation factor GreB.